Reading from the N-terminus, the 291-residue chain is Presqualene diphosphate synthase (291 aa).

Positions 1–23 (MTSAMKKIQPEAFSEKSSDSQAS) are disordered.

The protein belongs to the phytoene/squalene synthase family. HpnD subfamily.

The enzyme catalyses 2 (2E,6E)-farnesyl diphosphate = presqualene diphosphate + diphosphate. It functions in the pathway secondary metabolite biosynthesis; hopanoid biosynthesis. Its function is as follows. Involved in the biosynthesis of the hopanoid precursor squalene (SQ) from farnesyl diphosphate (FPP). Catalyzes the first step, the formation of presqualene diphosphate (PSPP) from two molecules of FPP. The chain is Presqualene diphosphate synthase from Zymomonas mobilis subsp. mobilis (strain ATCC 31821 / ZM4 / CP4).